A 555-amino-acid polypeptide reads, in one-letter code: MYSDKKNILQLVALLEAHGITKVVLCPGSRNAPIVHTLSTHPGFTCYAMTDERSAGYFAIGLALNGGHPAAVCCTSGTALLNLHPAVAEAYYQNIPLVVISADRPAAWIGQMAGQTLPQPGVFQTLVKKSVNLPEIQTEEDEWYCNRLVNEALLETNHHGKGPVHINIPISEPLFQFTVESLPEVRVITRYQGLNVYDRDYNDLIERLNRYQKRMIIVGQMNLIYLFEKRHTKLLYKHFVWLTEHIGNQTVPGIPVKNFDAALYAMPEEKTGQMTPELLITYGGHVVSKRLKKYLRQHPPKEHWHVSADGEVVDLYGSLTTVIEMDPFEFLEKIAPLLDNRVPEYPRVWENYCKTIPEPEFGYSEMSAIGALIKALPESCALHLANSSVIRYAQLYQVPSTIEVCCNRGTSGIEGSLSTAVGYAAGSDKLNFIVIGDLSFFYDMNALWNINVRPNLRILLLNNGGGEIFHTLPGLDMSGTSHKYITAVHKTSAKGWAEERGFLYQRVENEEQLAEAMKTFTQPEAMEQPVLMEVFSNKNKDARILKDYYHQLKQK.

This sequence belongs to the TPP enzyme family. MenD subfamily. As to quaternary structure, homodimer. The cofactor is Mg(2+). Requires Mn(2+) as cofactor. Thiamine diphosphate is required as a cofactor.

It carries out the reaction isochorismate + 2-oxoglutarate + H(+) = 5-enolpyruvoyl-6-hydroxy-2-succinyl-cyclohex-3-ene-1-carboxylate + CO2. It functions in the pathway quinol/quinone metabolism; 1,4-dihydroxy-2-naphthoate biosynthesis; 1,4-dihydroxy-2-naphthoate from chorismate: step 2/7. Its pathway is quinol/quinone metabolism; menaquinone biosynthesis. In terms of biological role, catalyzes the thiamine diphosphate-dependent decarboxylation of 2-oxoglutarate and the subsequent addition of the resulting succinic semialdehyde-thiamine pyrophosphate anion to isochorismate to yield 2-succinyl-5-enolpyruvyl-6-hydroxy-3-cyclohexene-1-carboxylate (SEPHCHC). This Bacteroides thetaiotaomicron (strain ATCC 29148 / DSM 2079 / JCM 5827 / CCUG 10774 / NCTC 10582 / VPI-5482 / E50) protein is 2-succinyl-5-enolpyruvyl-6-hydroxy-3-cyclohexene-1-carboxylate synthase.